We begin with the raw amino-acid sequence, 277 residues long: Phosphatidylserine decarboxylase proenzyme (277 aa).

Active-site charge relay system; for autoendoproteolytic cleavage activity residues include aspartate 88, histidine 144, and serine 242. The Schiff-base intermediate with substrate; via pyruvic acid; for decarboxylase activity role is filled by serine 242. Pyruvic acid (Ser); by autocatalysis is present on serine 242.

It belongs to the phosphatidylserine decarboxylase family. PSD-B subfamily. Prokaryotic type I sub-subfamily. Heterodimer of a large membrane-associated beta subunit and a small pyruvoyl-containing alpha subunit. The cofactor is pyruvate. Post-translationally, is synthesized initially as an inactive proenzyme. Formation of the active enzyme involves a self-maturation process in which the active site pyruvoyl group is generated from an internal serine residue via an autocatalytic post-translational modification. Two non-identical subunits are generated from the proenzyme in this reaction, and the pyruvate is formed at the N-terminus of the alpha chain, which is derived from the carboxyl end of the proenzyme. The autoendoproteolytic cleavage occurs by a canonical serine protease mechanism, in which the side chain hydroxyl group of the serine supplies its oxygen atom to form the C-terminus of the beta chain, while the remainder of the serine residue undergoes an oxidative deamination to produce ammonia and the pyruvoyl prosthetic group on the alpha chain. During this reaction, the Ser that is part of the protease active site of the proenzyme becomes the pyruvoyl prosthetic group, which constitutes an essential element of the active site of the mature decarboxylase.

Its subcellular location is the cell membrane. The catalysed reaction is a 1,2-diacyl-sn-glycero-3-phospho-L-serine + H(+) = a 1,2-diacyl-sn-glycero-3-phosphoethanolamine + CO2. It functions in the pathway phospholipid metabolism; phosphatidylethanolamine biosynthesis; phosphatidylethanolamine from CDP-diacylglycerol: step 2/2. Functionally, catalyzes the formation of phosphatidylethanolamine (PtdEtn) from phosphatidylserine (PtdSer). This Psychrobacter cryohalolentis (strain ATCC BAA-1226 / DSM 17306 / VKM B-2378 / K5) protein is Phosphatidylserine decarboxylase proenzyme.